Reading from the N-terminus, the 599-residue chain is Elongation factor 4 (599 aa).

One can recognise a tr-type G domain in the interval alanine 5–lysine 187. GTP is bound by residues aspartate 17–threonine 22 and asparagine 134–aspartate 137.

This sequence belongs to the TRAFAC class translation factor GTPase superfamily. Classic translation factor GTPase family. LepA subfamily.

The protein localises to the cell inner membrane. The enzyme catalyses GTP + H2O = GDP + phosphate + H(+). In terms of biological role, required for accurate and efficient protein synthesis under certain stress conditions. May act as a fidelity factor of the translation reaction, by catalyzing a one-codon backward translocation of tRNAs on improperly translocated ribosomes. Back-translocation proceeds from a post-translocation (POST) complex to a pre-translocation (PRE) complex, thus giving elongation factor G a second chance to translocate the tRNAs correctly. Binds to ribosomes in a GTP-dependent manner. This Ruegeria pomeroyi (strain ATCC 700808 / DSM 15171 / DSS-3) (Silicibacter pomeroyi) protein is Elongation factor 4.